Here is a 101-residue protein sequence, read N- to C-terminus: NAD(P)H-quinone oxidoreductase subunit 4L, chloroplastic (101 aa).

The next 3 helical transmembrane spans lie at 2 to 22 (MLEH…YGLI), 32 to 52 (MCLE…SDLF), and 61 to 81 (IFSI…PAIV).

It belongs to the complex I subunit 4L family. NDH is composed of at least 16 different subunits, 5 of which are encoded in the nucleus.

Its subcellular location is the plastid. The protein localises to the chloroplast thylakoid membrane. The catalysed reaction is a plastoquinone + NADH + (n+1) H(+)(in) = a plastoquinol + NAD(+) + n H(+)(out). The enzyme catalyses a plastoquinone + NADPH + (n+1) H(+)(in) = a plastoquinol + NADP(+) + n H(+)(out). Functionally, NDH shuttles electrons from NAD(P)H:plastoquinone, via FMN and iron-sulfur (Fe-S) centers, to quinones in the photosynthetic chain and possibly in a chloroplast respiratory chain. The immediate electron acceptor for the enzyme in this species is believed to be plastoquinone. Couples the redox reaction to proton translocation, and thus conserves the redox energy in a proton gradient. The protein is NAD(P)H-quinone oxidoreductase subunit 4L, chloroplastic of Chloranthus spicatus (Chulantree).